We begin with the raw amino-acid sequence, 226 residues long: Transmembrane protein 204 (226 aa).

Residues 1–5 (MTVQK) are Cytoplasmic-facing. The helical transmembrane segment at 6-26 (LVATAVLVALVSLILNNAAAF) threads the bilayer. Over 27-103 (TPNWVYQTLE…LQFDMMRACN (77 aa)) the chain is Extracellular. Residues 104–124 (LVATAALAVGQITFILGLTGL) form a helical membrane-spanning segment. The Cytoplasmic segment spans residues 125–136 (PLMSPESQCWEE). A helical transmembrane segment spans residues 137 to 157 (AMAAAFQLASFVLVIGLVTFY). Residues 158 to 170 (RIGPYTNLSWSCY) lie on the Extracellular side of the membrane. Asn164 carries N-linked (GlcNAc...) asparagine glycosylation. Residues 171 to 191 (LNIGACLLATLAAAMLIWNIL) form a helical membrane-spanning segment. At 192 to 226 (HRREDCMAPRVIVISRSLTARFRRGLDNDYVESPC) the chain is on the cytoplasmic side.

The protein resides in the cell junction. It localises to the adherens junction. It is found in the cell membrane. Can influence paracellular permeability. Appears to be involved in cell-cell interactions through adherens. This is Transmembrane protein 204 (Tmem204) from Rattus norvegicus (Rat).